The primary structure comprises 191 residues: LHFPL tetraspan subfamily member 7 protein (191 aa).

4 helical membrane passes run 6-26, 72-92, 112-132, and 154-174; these read MGSLWVILSLILTLISGFSLM, IAAVLLFGGWLLLSFGAVLVL, YAQISAVVVTVLGLLVFPFNL, and LGWGYMMAIVTVMLSCFLPFI.

It belongs to the TMEM211 family.

Its subcellular location is the membrane. In Xenopus tropicalis (Western clawed frog), this protein is LHFPL tetraspan subfamily member 7 protein (lhfpl7).